The primary structure comprises 79 residues: Acyl carrier protein (79 aa).

Residues 2–77 (STIEERVKKI…QAIDYVKVHV (76 aa)) enclose the Carrier domain. S37 is modified (O-(pantetheine 4'-phosphoryl)serine).

This sequence belongs to the acyl carrier protein (ACP) family. Post-translationally, 4'-phosphopantetheine is transferred from CoA to a specific serine of apo-ACP by AcpS. This modification is essential for activity because fatty acids are bound in thioester linkage to the sulfhydryl of the prosthetic group.

The protein localises to the cytoplasm. It functions in the pathway lipid metabolism; fatty acid biosynthesis. Functionally, carrier of the growing fatty acid chain in fatty acid biosynthesis. The sequence is that of Acyl carrier protein from Xanthomonas albilineans.